The sequence spans 115 residues: Large ribosomal subunit protein bL19 (115 aa).

Belongs to the bacterial ribosomal protein bL19 family.

In terms of biological role, this protein is located at the 30S-50S ribosomal subunit interface and may play a role in the structure and function of the aminoacyl-tRNA binding site. This Wigglesworthia glossinidia brevipalpis protein is Large ribosomal subunit protein bL19.